Here is a 260-residue protein sequence, read N- to C-terminus: uncharacterized protein (260 aa).

Residues 214–252 (IHQFIETEIERIMEAAKELKAEKKDMTSELNRLLLNTVE) adopt a coiled-coil conformation.

This is an uncharacterized protein from Bacillus subtilis (strain 168).